Consider the following 320-residue polypeptide: uncharacterized protein (320 aa).

46–53 (DVPGVGKT) is an ATP binding site.

Belongs to the MoxR family.

This is an uncharacterized protein from Bacillus subtilis (strain 168).